Consider the following 362-residue polypeptide: MQPTLFIDRDGTLIDEPKTDFQIDSLEKLKLEPKVIPALLRLKAKYRFVIVSNQDGLGTDAFPQTNFDKPHNVMMALFESQGITFDEVLICPHKPEENCLCRKPKIKLLDHYIRKNLFDIDRSFVIGDRETDVQLAENLGIRAIQYDPQKMNWDLIAEKLLGETVTNCGKRPPRFAEVIRQTKETDIKVQIWLDEAGVNEIKTGVGFFDHMLDQIATHGGFRMNVQCKGDLWIDEHHTVEDTALALGQALKQAIGDKRGIARFGFVLPMDECKAECALDLSGRPWIKFNACFKRDKVGDFSTELTEHFFQSLAFSMLATIHLNVTGNNDHHKIESLFKAFGRTLRQAIRIEGNEMPSSKGVL.

Residues 1-173 (MQPTLFIDRD…TVTNCGKRPP (173 aa)) are histidinol-phosphatase. The active-site Nucleophile is Asp-8. Mg(2+)-binding residues include Asp-8 and Asp-10. The active-site Proton donor is Asp-10. The Zn(2+) site is built by Cys-91, His-93, Cys-99, and Cys-101. Residue Asp-128 coordinates Mg(2+). Residues 174–362 (RFAEVIRQTK…NEMPSSKGVL (189 aa)) are imidazoleglycerol-phosphate dehydratase.

This sequence in the N-terminal section; belongs to the histidinol-phosphatase family. It in the C-terminal section; belongs to the imidazoleglycerol-phosphate dehydratase family. Mg(2+) is required as a cofactor. It depends on Zn(2+) as a cofactor.

It is found in the cytoplasm. It catalyses the reaction D-erythro-1-(imidazol-4-yl)glycerol 3-phosphate = 3-(imidazol-4-yl)-2-oxopropyl phosphate + H2O. It carries out the reaction L-histidinol phosphate + H2O = L-histidinol + phosphate. Its pathway is amino-acid biosynthesis; L-histidine biosynthesis; L-histidine from 5-phospho-alpha-D-ribose 1-diphosphate: step 6/9. It participates in amino-acid biosynthesis; L-histidine biosynthesis; L-histidine from 5-phospho-alpha-D-ribose 1-diphosphate: step 8/9. The protein is Histidine biosynthesis bifunctional protein HisB of Haemophilus influenzae (strain 86-028NP).